The primary structure comprises 572 residues: Thiamine biosynthesis protein THI22 (572 aa).

Positions 1 to 19 (MVIILLGLCTLGFPRTAFC) are cleaved as a signal peptide.

The protein belongs to the thiaminase-2 family.

Its subcellular location is the secreted. Its function is as follows. Is not required for thiamine biosynthesis. This chain is Thiamine biosynthesis protein THI22 (THI22), found in Saccharomyces cerevisiae (strain ATCC 204508 / S288c) (Baker's yeast).